The sequence spans 607 residues: Dihydroxy-acid dehydratase (607 aa).

Asp-81 is a binding site for Mg(2+). [2Fe-2S] cluster is bound at residue Cys-122. 2 residues coordinate Mg(2+): Asp-123 and Lys-124. The residue at position 124 (Lys-124) is an N6-carboxylysine. Residue Cys-195 participates in [2Fe-2S] cluster binding. Glu-489 serves as a coordination point for Mg(2+). Ser-515 acts as the Proton acceptor in catalysis.

Belongs to the IlvD/Edd family. Homodimer. Requires [2Fe-2S] cluster as cofactor. Mg(2+) serves as cofactor.

The enzyme catalyses (2R)-2,3-dihydroxy-3-methylbutanoate = 3-methyl-2-oxobutanoate + H2O. It catalyses the reaction (2R,3R)-2,3-dihydroxy-3-methylpentanoate = (S)-3-methyl-2-oxopentanoate + H2O. It functions in the pathway amino-acid biosynthesis; L-isoleucine biosynthesis; L-isoleucine from 2-oxobutanoate: step 3/4. It participates in amino-acid biosynthesis; L-valine biosynthesis; L-valine from pyruvate: step 3/4. In terms of biological role, functions in the biosynthesis of branched-chain amino acids. Catalyzes the dehydration of (2R,3R)-2,3-dihydroxy-3-methylpentanoate (2,3-dihydroxy-3-methylvalerate) into 2-oxo-3-methylpentanoate (2-oxo-3-methylvalerate) and of (2R)-2,3-dihydroxy-3-methylbutanoate (2,3-dihydroxyisovalerate) into 2-oxo-3-methylbutanoate (2-oxoisovalerate), the penultimate precursor to L-isoleucine and L-valine, respectively. This Deinococcus radiodurans (strain ATCC 13939 / DSM 20539 / JCM 16871 / CCUG 27074 / LMG 4051 / NBRC 15346 / NCIMB 9279 / VKM B-1422 / R1) protein is Dihydroxy-acid dehydratase.